Consider the following 447-residue polypeptide: Na(+)-translocating NADH-quinone reductase subunit A (447 aa).

Belongs to the NqrA family. In terms of assembly, composed of six subunits; NqrA, NqrB, NqrC, NqrD, NqrE and NqrF.

It catalyses the reaction a ubiquinone + n Na(+)(in) + NADH + H(+) = a ubiquinol + n Na(+)(out) + NAD(+). Functionally, NQR complex catalyzes the reduction of ubiquinone-1 to ubiquinol by two successive reactions, coupled with the transport of Na(+) ions from the cytoplasm to the periplasm. NqrA to NqrE are probably involved in the second step, the conversion of ubisemiquinone to ubiquinol. In Saccharophagus degradans (strain 2-40 / ATCC 43961 / DSM 17024), this protein is Na(+)-translocating NADH-quinone reductase subunit A.